A 150-amino-acid chain; its full sequence is Large ribosomal subunit protein bL9 (150 aa).

The protein belongs to the bacterial ribosomal protein bL9 family.

Functionally, binds to the 23S rRNA. The sequence is that of Large ribosomal subunit protein bL9 from Delftia acidovorans (strain DSM 14801 / SPH-1).